The sequence spans 272 residues: 4-hydroxy-tetrahydrodipicolinate reductase (272 aa).

NAD(+) is bound at residue 12–17; the sequence is GALGKM. Lysine 39 lines the NADP(+) pocket. NAD(+)-binding positions include 102–104 and 126–129; these read GTT and SSNY. Histidine 159 acts as the Proton donor/acceptor in catalysis. Histidine 160 provides a ligand contact to (S)-2,3,4,5-tetrahydrodipicolinate. The Proton donor role is filled by lysine 163. 169–170 lines the (S)-2,3,4,5-tetrahydrodipicolinate pocket; that stretch reads GT.

Belongs to the DapB family. In terms of assembly, homotetramer.

The protein resides in the cytoplasm. The enzyme catalyses (S)-2,3,4,5-tetrahydrodipicolinate + NAD(+) + H2O = (2S,4S)-4-hydroxy-2,3,4,5-tetrahydrodipicolinate + NADH + H(+). The catalysed reaction is (S)-2,3,4,5-tetrahydrodipicolinate + NADP(+) + H2O = (2S,4S)-4-hydroxy-2,3,4,5-tetrahydrodipicolinate + NADPH + H(+). The protein operates within amino-acid biosynthesis; L-lysine biosynthesis via DAP pathway; (S)-tetrahydrodipicolinate from L-aspartate: step 4/4. In terms of biological role, catalyzes the conversion of 4-hydroxy-tetrahydrodipicolinate (HTPA) to tetrahydrodipicolinate. This chain is 4-hydroxy-tetrahydrodipicolinate reductase, found in Buchnera aphidicola subsp. Baizongia pistaciae (strain Bp).